Reading from the N-terminus, the 181-residue chain is Adenine phosphoribosyltransferase (181 aa).

The protein belongs to the purine/pyrimidine phosphoribosyltransferase family. As to quaternary structure, homodimer.

It is found in the cytoplasm. The catalysed reaction is AMP + diphosphate = 5-phospho-alpha-D-ribose 1-diphosphate + adenine. Its pathway is purine metabolism; AMP biosynthesis via salvage pathway; AMP from adenine: step 1/1. Catalyzes a salvage reaction resulting in the formation of AMP, that is energically less costly than de novo synthesis. This chain is Adenine phosphoribosyltransferase, found in Aliivibrio salmonicida (strain LFI1238) (Vibrio salmonicida (strain LFI1238)).